The following is a 144-amino-acid chain: Small ribosomal subunit protein bS6 (144 aa).

Residues 99 to 144 are disordered; the sequence is KASPLAPCEEKGEEGKAEDAADELTTFGMADDDDLGDDDDTVEAGI. Residues 106 to 117 are compositionally biased toward basic and acidic residues; it reads CEEKGEEGKAED. The segment covering 128-144 has biased composition (acidic residues); the sequence is ADDDDLGDDDDTVEAGI.

Belongs to the bacterial ribosomal protein bS6 family.

In terms of biological role, binds together with bS18 to 16S ribosomal RNA. The chain is Small ribosomal subunit protein bS6 from Magnetococcus marinus (strain ATCC BAA-1437 / JCM 17883 / MC-1).